We begin with the raw amino-acid sequence, 50 residues long: Light-harvesting protein B-870 beta chain (50 aa).

Topologically, residues 2–22 are cytoplasmic; sequence ADNTDLSFTGLTDEQAQELHS. A bacteriochlorophyll is bound by residues histidine 21 and histidine 39. The chain crosses the membrane as a helical span at residues 23–45; sequence VYMSGLFLFAAVAVVAHLATYIW. The Periplasmic portion of the chain corresponds to 46–50; sequence RPWFG.

The protein belongs to the antenna complex beta subunit family. The core complex is formed by different alpha and beta chains, binding bacteriochlorophyll molecules, and arranged most probably in tetrameric structures disposed around the reaction center. The non-pigmented gamma chains may constitute additional components.

It localises to the cell inner membrane. Its function is as follows. Antenna complexes are light-harvesting systems, which transfer the excitation energy to the reaction centers. This Roseobacter denitrificans (strain ATCC 33942 / OCh 114) (Erythrobacter sp. (strain OCh 114)) protein is Light-harvesting protein B-870 beta chain (pufB).